Reading from the N-terminus, the 447-residue chain is MPVSVSDSFVFRNIFGDAEIRKIWSDENRTQEYLNWEAALARAEASLGIIPKYAGEEIQRVCKVENIDFSKLEEETINIGYPVLGVVHQLANLCSGDSGKYCHWGATTQDVTDSATVRQMIDSFKIIKGYLEKAIELATVLVIKHRETTMAGRSNLQQAVPITFGFKMARFVATLRRHHQRLCELLPRVSVLEFGGACGTLASLENKGLMVQQKLAEELGLLQPEIAWHTERDRIAEAGCFLGMLTGTLAKFATDIKLLMQTEVAEVFEPFKANRGSSSTMPQKRNPISCVYITASTSFVRQGVAALLDAMVEDHERATGAWEIEWIVLPDVFVHTVGTLKQTVFLLEGLEVHPSRMNENLSITNGLIVSEAVMMALAPKLGRDEAHDLVYRLCHLSIQENKPLVELLLAERQVTNYLSKEEVTSLLNPENYLGSTFEMIERALQIP.

The protein belongs to the class-II fumarase/aspartase family.

Its subcellular location is the cytoplasm. It is found in the nucleus. This is an uncharacterized protein from Schizosaccharomyces pombe (strain 972 / ATCC 24843) (Fission yeast).